The primary structure comprises 235 residues: Proteasome subunit alpha type-2-B (235 aa).

Lysine 64 participates in a covalent cross-link: Glycyl lysine isopeptide (Lys-Gly) (interchain with G-Cter in ubiquitin).

Belongs to the peptidase T1A family. Component of the 20S core complex of the 26S proteasome. The 26S proteasome is composed of a core protease (CP), known as the 20S proteasome, capped at one or both ends by the 19S regulatory particle (RP/PA700). The 20S proteasome core is composed of 28 subunits that are arranged in four stacked rings, resulting in a barrel-shaped structure. The two end rings are each formed by seven alpha subunits, and the two central rings are each formed by seven beta subunits. The catalytic chamber with the active sites is on the inside of the barrel.

The protein resides in the cytoplasm. It is found in the nucleus. In terms of biological role, the proteasome is a multicatalytic proteinase complex which is characterized by its ability to cleave peptides with Arg, Phe, Tyr, Leu, and Glu adjacent to the leaving group at neutral or slightly basic pH. The proteasome has an ATP-dependent proteolytic activity. This is Proteasome subunit alpha type-2-B (PAB2) from Arabidopsis thaliana (Mouse-ear cress).